The chain runs to 132 residues: MNRIMHKSKIHRATVTEANLNYVGSITIDEDLMDAADVLENEKIQVVNNNNGARFETYVIPGPRGSGVICLNGAAARLVQPGDKVILITYGIYDDAEARQHRPTVIFLDDQNRIIADARREKAGETAPTGEA.

Catalysis depends on serine 25, which acts as the Schiff-base intermediate with substrate; via pyruvic acid. Serine 25 carries the post-translational modification Pyruvic acid (Ser). Substrate is bound at residue threonine 57. The active-site Proton donor is the tyrosine 58. Residue 73–75 (GAA) coordinates substrate.

The protein belongs to the PanD family. Heterooctamer of four alpha and four beta subunits. Requires pyruvate as cofactor. Is synthesized initially as an inactive proenzyme, which is activated by self-cleavage at a specific serine bond to produce a beta-subunit with a hydroxyl group at its C-terminus and an alpha-subunit with a pyruvoyl group at its N-terminus.

It localises to the cytoplasm. The catalysed reaction is L-aspartate + H(+) = beta-alanine + CO2. The protein operates within cofactor biosynthesis; (R)-pantothenate biosynthesis; beta-alanine from L-aspartate: step 1/1. Functionally, catalyzes the pyruvoyl-dependent decarboxylation of aspartate to produce beta-alanine. This is Aspartate 1-decarboxylase from Heliobacterium modesticaldum (strain ATCC 51547 / Ice1).